The sequence spans 132 residues: Gonadotropin subunit beta-1 (132 aa).

The N-terminal stretch at 1 to 17 is a signal peptide; it reads MMRGVTMVLLLPMLVWA. Disulfide bonds link Cys25/Cys73, Cys39/Cys88, Cys50/Cys104, Cys54/Cys106, and Cys109/Cys116. 2 N-linked (GlcNAc...) asparagine glycosylation sites follow: Asn29 and Asn46.

Belongs to the glycoprotein hormones subunit beta family. As to quaternary structure, heterodimer of an alpha and a beta chain.

The protein resides in the secreted. In terms of biological role, involved in gametogenesis and steroidogenesis. The polypeptide is Gonadotropin subunit beta-1 (cgba) (Ictalurus punctatus (Channel catfish)).